Here is a 500-residue protein sequence, read N- to C-terminus: NAD(P)H-quinone oxidoreductase chain 4, chloroplastic (500 aa).

A run of 14 helical transmembrane segments spans residues 4 to 24 (FPWL…IFLF), 31 to 51 (VIKW…TYAF), 84 to 104 (GFSL…TLAA), 111 to 129 (SRLF…IGLF), 134 to 154 (LLLF…LLSM), 167 to 187 (FILY…GIAL), 208 to 228 (ALEI…SPII), 242 to 262 (HYST…YGLV), 272 to 292 (AHSI…IYAA), 305 to 325 (IAYS…SISD), 330 to 350 (GAIL…FLAG), 386 to 406 (LALP…GIIT), 416 to 436 (ILIT…LLSM), and 463 to 483 (FVSI…DFVF).

The protein belongs to the complex I subunit 4 family.

It localises to the plastid. It is found in the chloroplast thylakoid membrane. It carries out the reaction a plastoquinone + NADH + (n+1) H(+)(in) = a plastoquinol + NAD(+) + n H(+)(out). It catalyses the reaction a plastoquinone + NADPH + (n+1) H(+)(in) = a plastoquinol + NADP(+) + n H(+)(out). The polypeptide is NAD(P)H-quinone oxidoreductase chain 4, chloroplastic (Manihot esculenta (Cassava)).